The sequence spans 200 residues: Casparian strip membrane protein 1 (200 aa).

At Met-1–Gly-38 the chain is on the cytoplasmic side. The chain crosses the membrane as a helical span at residues Leu-39 to Ala-59. At Thr-60–Thr-86 the chain is on the extracellular side. A helical transmembrane segment spans residues Phe-87–Phe-107. Residues Ser-108 to Arg-121 are Cytoplasmic-facing. Residues Leu-122–Ala-142 traverse the membrane as a helical segment. The Extracellular portion of the chain corresponds to Ala-143–Glu-171. A helical transmembrane segment spans residues Val-172–Leu-192. At Ser-193 to His-200 the chain is on the cytoplasmic side.

The protein belongs to the Casparian strip membrane proteins (CASP) family. In terms of assembly, homodimer and heterodimers.

The protein localises to the cell membrane. Functionally, regulates membrane-cell wall junctions and localized cell wall deposition. Required for establishment of the Casparian strip membrane domain (CSD) and the subsequent formation of Casparian strips, a cell wall modification of the root endodermis that determines an apoplastic barrier between the intraorganismal apoplasm and the extraorganismal apoplasm and prevents lateral diffusion. The protein is Casparian strip membrane protein 1 of Theobroma cacao (Cacao).